The sequence spans 262 residues: Phosphatidylserine decarboxylase proenzyme (262 aa).

Active-site charge relay system; for autoendoproteolytic cleavage activity residues include aspartate 86, histidine 142, and serine 226. Serine 226 acts as the Schiff-base intermediate with substrate; via pyruvic acid; for decarboxylase activity in catalysis. Serine 226 is modified (pyruvic acid (Ser); by autocatalysis).

Belongs to the phosphatidylserine decarboxylase family. PSD-B subfamily. Prokaryotic type I sub-subfamily. Heterodimer of a large membrane-associated beta subunit and a small pyruvoyl-containing alpha subunit. Requires pyruvate as cofactor. In terms of processing, is synthesized initially as an inactive proenzyme. Formation of the active enzyme involves a self-maturation process in which the active site pyruvoyl group is generated from an internal serine residue via an autocatalytic post-translational modification. Two non-identical subunits are generated from the proenzyme in this reaction, and the pyruvate is formed at the N-terminus of the alpha chain, which is derived from the carboxyl end of the proenzyme. The autoendoproteolytic cleavage occurs by a canonical serine protease mechanism, in which the side chain hydroxyl group of the serine supplies its oxygen atom to form the C-terminus of the beta chain, while the remainder of the serine residue undergoes an oxidative deamination to produce ammonia and the pyruvoyl prosthetic group on the alpha chain. During this reaction, the Ser that is part of the protease active site of the proenzyme becomes the pyruvoyl prosthetic group, which constitutes an essential element of the active site of the mature decarboxylase.

Its subcellular location is the cell membrane. The catalysed reaction is a 1,2-diacyl-sn-glycero-3-phospho-L-serine + H(+) = a 1,2-diacyl-sn-glycero-3-phosphoethanolamine + CO2. The protein operates within phospholipid metabolism; phosphatidylethanolamine biosynthesis; phosphatidylethanolamine from CDP-diacylglycerol: step 2/2. In terms of biological role, catalyzes the formation of phosphatidylethanolamine (PtdEtn) from phosphatidylserine (PtdSer). The polypeptide is Phosphatidylserine decarboxylase proenzyme (Bacillus thuringiensis subsp. konkukian (strain 97-27)).